Reading from the N-terminus, the 770-residue chain is NAD-dependent malic enzyme (770 aa).

Residues Met1–Gly440 are malic enzyme. The active-site Proton acceptor is Lys107. Positions 149 and 150 each coordinate a divalent metal cation. Positions 175 and 300 each coordinate NAD(+). Residues Phe441–Val770 form a phosphate acetyltransferase region.

It in the N-terminal section; belongs to the malic enzymes family. This sequence in the C-terminal section; belongs to the phosphate acetyltransferase and butyryltransferase family. In terms of assembly, homooctamer. The cofactor is Mg(2+). Requires Mn(2+) as cofactor.

The enzyme catalyses (S)-malate + NAD(+) = pyruvate + CO2 + NADH. Subject to substrate inhibition and shows allosteric regulation by acetyl-CoA. Functionally, required for symbiotic nitrogen fixation. Plays a key role in the conversion of malate to acetyl-CoA for efficient tricarboxylic acid cycle function in nitrogen-fixating bacteria. This is NAD-dependent malic enzyme (dme) from Rhizobium meliloti (strain 1021) (Ensifer meliloti).